The primary structure comprises 73 residues: Kazal peptide Pr13a (73 aa).

The first 20 residues, 1-20, serve as a signal peptide directing secretion; sequence MKYIILFLVLIGLQANLALG. A Kazal-like domain is found at 21–73; it reads SKCKCDCTKYPYSPVCAKELKTGDTETFNNVCQLQCYNCTHMKNYVVIYSGSC. 3 cysteine pairs are disulfide-bonded: Cys-23–Cys-59, Cys-27–Cys-52, and Cys-36–Cys-73.

Expressed by the venom gland (anterior main gland) (at protein level).

Its subcellular location is the secreted. May act as a serine protease inhibitor, since it possess the kazal serine protease inhibitor signature. The sequence is that of Kazal peptide Pr13a from Platymeris rhadamanthus (Red spot assassin bug).